The following is a 475-amino-acid chain: Ribulose bisphosphate carboxylase large chain (475 aa).

Positions 1 to 2 are excised as a propeptide; that stretch reads MS. The residue at position 3 (P3) is an N-acetylproline. Residue K14 is modified to N6,N6,N6-trimethyllysine. Substrate contacts are provided by N123 and T173. Catalysis depends on K175, which acts as the Proton acceptor. Residue K177 participates in substrate binding. Residues K201, D203, and E204 each coordinate Mg(2+). Position 201 is an N6-carboxylysine (K201). Catalysis depends on H294, which acts as the Proton acceptor. The substrate site is built by R295, H327, and S379.

The protein belongs to the RuBisCO large chain family. Type I subfamily. In terms of assembly, heterohexadecamer of 8 large chains and 8 small chains; disulfide-linked. The disulfide link is formed within the large subunit homodimers. Mg(2+) is required as a cofactor. In terms of processing, the disulfide bond which can form in the large chain dimeric partners within the hexadecamer appears to be associated with oxidative stress and protein turnover.

Its subcellular location is the plastid. It localises to the chloroplast. It carries out the reaction 2 (2R)-3-phosphoglycerate + 2 H(+) = D-ribulose 1,5-bisphosphate + CO2 + H2O. The enzyme catalyses D-ribulose 1,5-bisphosphate + O2 = 2-phosphoglycolate + (2R)-3-phosphoglycerate + 2 H(+). Functionally, ruBisCO catalyzes two reactions: the carboxylation of D-ribulose 1,5-bisphosphate, the primary event in carbon dioxide fixation, as well as the oxidative fragmentation of the pentose substrate in the photorespiration process. Both reactions occur simultaneously and in competition at the same active site. In Picea sitchensis (Sitka spruce), this protein is Ribulose bisphosphate carboxylase large chain.